Here is a 97-residue protein sequence, read N- to C-terminus: Large ribosomal subunit protein bL27 (97 aa).

Residues 1–12 constitute a propeptide that is removed on maturation; sequence MLNLNLANLQFM. The tract at residues 15–37 is disordered; the sequence is KKGGGSTSNGRDSQAKRLGAKAA.

It belongs to the bacterial ribosomal protein bL27 family. In terms of processing, the N-terminus is cleaved by ribosomal processing cysteine protease Prp.

This Streptococcus suis (strain 98HAH33) protein is Large ribosomal subunit protein bL27.